Here is an 831-residue protein sequence, read N- to C-terminus: MRLPYSWLREVVAVGASGWDVTPGELEQTLLRIGHEVEEVIPLGPVDGPVTVGRVADIEELTGYKKPIRACAVDIGDRQYREIICGATNFAVGDLVVVALPGATLPGGFTISARKAYGRNSDGMICSAAELNLGADHSGILVLPPGAAEPGADGAGVLGLDDVVFHLAITPDRGYCMSVRGLARELACAYDLDFVDPASNSRVPPLPIEGPVWPLTVQPETGVRRFALRPVIGIDPAAVSPWWLQRRLLLCGIRATCPAVDVTNYVMLELGHPMHAHDRNRISGTLGVRFARSGETAVTLDGIERKLDTADVLIVDDAATAAIGGVMGAASTEVRADSTDVLLEAAIWDPAAVSRTQRRLHLPSEAARRYERTVDPAISVAALDRCARLLADIAGGEVSPTLTDWRGDPPCDDWSPPPIRMGVDVPDRIAGVAYPQGTTARRLAQIGAVVTHDGDTLTVTPPSWRPDLRQPADLVEEVLRLEGLEVIPSVLPPAPAGRGLTAGQQRRRTIGRSLALSGYVEILPTPFLPAGVFDLWGLEADDSRRMTTRVLNPLEADRPQLATTLLPALLEALVRNVSRGLVDVALFAIAQVVQPTEQTRGVGLIPVDRRPTDDEIAMLDASLPRQPQHVAAVLAGLREPRGPWGPGRPVEAADAFEAVRIIARASRVDVTLRPAQYLPWHPGRCAQVFVGESSVGHAGQLHPAVIERSGLPKGTCAVELNLDAIPCSAPLPAPRVSPYPAVFQDVSLVVAADIPAQAVADAVRAGAGDLLEDIALFDVFTGPQIGEHRKSLTFALRFRAPDRTLTEDDASAARDAAVQSAAERVGAVLRG.

Residues 44–155 (GPVDGPVTVG…GAAEPGADGA (112 aa)) form the tRNA-binding domain. Positions 414–489 (WSPPPIRMGV…RLEGLEVIPS (76 aa)) constitute a B5 domain. Mg(2+) contacts are provided by Asp467, Asp473, Glu476, and Glu477. The region spanning 737–830 (SPYPAVFQDV…AAERVGAVLR (94 aa)) is the FDX-ACB domain.

This sequence belongs to the phenylalanyl-tRNA synthetase beta subunit family. Type 1 subfamily. Tetramer of two alpha and two beta subunits. It depends on Mg(2+) as a cofactor.

Its subcellular location is the cytoplasm. It carries out the reaction tRNA(Phe) + L-phenylalanine + ATP = L-phenylalanyl-tRNA(Phe) + AMP + diphosphate + H(+). In Mycobacterium bovis (strain ATCC BAA-935 / AF2122/97), this protein is Phenylalanine--tRNA ligase beta subunit.